We begin with the raw amino-acid sequence, 81 residues long: Sulfur carrier protein TusA (81 aa).

Cys19 acts as the Cysteine persulfide intermediate in catalysis.

This sequence belongs to the sulfur carrier protein TusA family.

It localises to the cytoplasm. Sulfur carrier protein which probably makes part of a sulfur-relay system. The chain is Sulfur carrier protein TusA from Shewanella baltica (strain OS223).